Reading from the N-terminus, the 215-residue chain is MKVAVNGNPLIGLYAKVSEEYAVVGVNHEPLIDAIQEKLDVDVIVTKIAGSELVGAMMALNSRGAVVSDQVLSSELRELEKSLDVLVIETPMTCFGNNLLINDRGGIANPEMESSVVEKVADFMDIELVKGTVGGIKTVGMAAVVTNRGGLANPNINEWEAKKLQEVAGVEVLTGTVNFGTDMVGSGLVANSKGYVVGRDTTGFELGIVEEALFP.

The protein belongs to the eIF-6 family.

Its function is as follows. Binds to the 50S ribosomal subunit and prevents its association with the 30S ribosomal subunit to form the 70S initiation complex. The protein is Translation initiation factor 6 of Archaeoglobus fulgidus (strain ATCC 49558 / DSM 4304 / JCM 9628 / NBRC 100126 / VC-16).